A 520-amino-acid polypeptide reads, in one-letter code: Ribonuclease Y (520 aa).

Over 1-3 (MTP) the chain is Extracellular. A helical membrane pass occupies residues 4 to 24 (IMMVLISILLILLGLVVGYFV). The Cytoplasmic segment spans residues 25–520 (RKTIAEAKIA…RETRAVEYAK (496 aa)). A coiled-coil region spans residues 29-141 (AEAKIAGARG…KVDEMIRMQQ (113 aa)). Positions 210–273 (TVSVVNLPND…ETARIALDKL (64 aa)) constitute a KH domain. The region spanning 336–429 (VLKHSMEVAF…VAAADALSAA (94 aa)) is the HD domain.

This sequence belongs to the RNase Y family. In terms of assembly, homodimer. Component of a possible RNA degradosome complex composed of rny, rnjA, rnjB, pnp, pfkA and eno (although rnjA and rnjB's presence is unclear). Interacts with RNA helicase CshA which may also be a member of the RNA degradosome complex. Interacts with full-length dynamin-like protein DynA. Mg(2+) is required as a cofactor. Requires Mn(2+) as cofactor. Zn(2+) serves as cofactor.

It is found in the cell membrane. With respect to regulation, shows preference for transcripts carrying a monophosphate group at the 5' end. Its function is as follows. Endoribonuclease that initiates mRNA decay. Initiates the decay of all SAM-dependent riboswitches, such as yitJ riboswitch. Involved in processing of the gapA operon mRNA, it cleaves between cggR and gapA. Is also the decay-initiating endonuclease for rpsO mRNA. Involved in degradation of type I toxin-antitoxin system bsrG/SR4 RNAs and a minor role in degradation of type I toxin-antitoxin system bsrE/SR5 degradation. In Bacillus subtilis (strain 168), this protein is Ribonuclease Y (rny).